A 767-amino-acid chain; its full sequence is Transducin-like enhancer protein 1 (767 aa).

Disordered stretches follow at residues 1–26 (MFPQ…PPQS) and 200–346 (ADAE…TSAS). Basic and acidic residues-rich tracts occupy residues 200–209 (ADAEHRERDP), 235–255 (RKTE…RSED), and 277–289 (NGVD…RKDP). The tract at residues 212–274 (SCLTLPNGER…SPHSVHSYSS (63 aa)) is CCN domain. The segment covering 294–306 (PNSMTSSSSVSPS) has biased composition (low complexity). Residues 324–346 (LKSSTPNSQSDLNTPGPSGTSAS) are compositionally biased toward polar residues. WD repeat units lie at residues 467–498 (GIPR…HVYT), 525–555 (NRDN…SIWD), 569–599 (SSAP…VVWD), 611–641 (GHTD…RCWD), 693–723 (LHES…NAWR), and 734–764 (KESS…TVYE).

Belongs to the WD repeat Groucho/TLE family. Ubiquitinated by XIAP/BIRC4. In terms of tissue distribution, abundantly expressed in brain, lung, testis and ovary in comparison with liver, heart, kidney and spleen. Ubiquitously expressed in the developing embryo. Present in unfertilized and fertilized eggs.

The protein localises to the nucleus. Nuclear effector molecule. The chain is Transducin-like enhancer protein 1 (esg1) from Xenopus laevis (African clawed frog).